Consider the following 93-residue polypeptide: Large ribosomal subunit protein bL27 (93 aa).

A propeptide spanning residues 1–9 is cleaved from the precursor; the sequence is MLQLNLQFF. The tract at residues 14-33 is disordered; it reads GVGSTKNGRDSISKRLGAKR.

The protein belongs to the bacterial ribosomal protein bL27 family. Post-translationally, the N-terminus is cleaved by ribosomal processing cysteine protease Prp.

This Exiguobacterium sp. (strain ATCC BAA-1283 / AT1b) protein is Large ribosomal subunit protein bL27.